The sequence spans 439 residues: Methylenetetrahydrofolate--tRNA-(uracil-5-)-methyltransferase TrmFO (439 aa).

Residue 7-12 (GAGLAG) participates in FAD binding.

This sequence belongs to the MnmG family. TrmFO subfamily. The cofactor is FAD.

The protein localises to the cytoplasm. The catalysed reaction is uridine(54) in tRNA + (6R)-5,10-methylene-5,6,7,8-tetrahydrofolate + NADH + H(+) = 5-methyluridine(54) in tRNA + (6S)-5,6,7,8-tetrahydrofolate + NAD(+). It catalyses the reaction uridine(54) in tRNA + (6R)-5,10-methylene-5,6,7,8-tetrahydrofolate + NADPH + H(+) = 5-methyluridine(54) in tRNA + (6S)-5,6,7,8-tetrahydrofolate + NADP(+). Its function is as follows. Catalyzes the folate-dependent formation of 5-methyl-uridine at position 54 (M-5-U54) in all tRNAs. This chain is Methylenetetrahydrofolate--tRNA-(uracil-5-)-methyltransferase TrmFO, found in Heliobacterium modesticaldum (strain ATCC 51547 / Ice1).